The primary structure comprises 840 residues: Probable alpha-glucuronidase A (840 aa).

The signal sequence occupies residues 1-19 (MWSGIPVFALLSSIGIAAA). 13 N-linked (GlcNAc...) asparagine glycosylation sites follow: Asn50, Asn149, Asn222, Asn262, Asn279, Asn310, Asn465, Asn527, Asn576, Asn610, Asn682, Asn723, and Asn732.

It belongs to the glycosyl hydrolase 67 family.

It is found in the secreted. It carries out the reaction an alpha-D-glucuronoside + H2O = D-glucuronate + an alcohol. In terms of biological role, alpha-glucuronidase involved in the hydrolysis of xylan, a major structural heterogeneous polysaccharide found in plant biomass representing the second most abundant polysaccharide in the biosphere, after cellulose. Releases 4-O-methylglucuronic acid from xylan. This is Probable alpha-glucuronidase A (aguA) from Neosartorya fischeri (strain ATCC 1020 / DSM 3700 / CBS 544.65 / FGSC A1164 / JCM 1740 / NRRL 181 / WB 181) (Aspergillus fischerianus).